Here is a 380-residue protein sequence, read N- to C-terminus: MHMQTKLIHGGISEDATTGAVSVPIYQTSTYRQDAIGHHKGYEYSRSGNPTRFALEELIADLEGGVKGFAFASGLAGIHAVFSLLQSGDHVLLGDDVYGGTFRLFNKVLVKNGLSCTIIDTSDLSQIKKAIKPNTKALYLETPSNPLLKITDLAQCASVAKDHGLLTIVDNTFATPYYQNPLLLGADIVVHSGTKYLGGHSDVVAGLVTTNNEALAQEIAFFQNAIGGVLGPQDSWLLQRGIKTLGLRMQAHQKNALCVAEFLEKHPKVERVYYPGLPTHPNYELAKKQMRGFSGMLSFTLKNDSEATPFVESLKLFILGESLGGVESLVGVPAFMTHACIPKTQREAAGIRDGLVRLSVGIEHEQDLLEDLEQAFAKIS.

Position 195 is an N6-(pyridoxal phosphate)lysine (lysine 195).

Belongs to the trans-sulfuration enzymes family. As to quaternary structure, homotetramer. Pyridoxal 5'-phosphate serves as cofactor.

It localises to the cytoplasm. The enzyme catalyses O-succinyl-L-homoserine + L-cysteine = L,L-cystathionine + succinate + H(+). Its pathway is amino-acid biosynthesis; L-methionine biosynthesis via de novo pathway; L-cystathionine from O-succinyl-L-homoserine: step 1/1. Four natural products, alpha-lapachone, 9-hydroxy-alpha-lapachone, Paulownin, and Yangambin, show strong inhibitory activities against CGS. All these four inhibitors prevent the binding of OSHS to CGS in a non-competitive fashion. These compounds are specific inhibitors against CGS from H.pylori relative to E.coli since they exhibit very low inhibition activities against CGS from E.coli. Functionally, catalyzes the formation of L-cystathionine from O-succinyl-L-homoserine (OSHS) and L-cysteine, via a gamma-replacement reaction. In the absence of thiol, catalyzes gamma-elimination to form 2-oxobutanoate, succinate and ammonia. The chain is Cystathionine gamma-synthase (metB) from Helicobacter pylori (Campylobacter pylori).